Consider the following 210-residue polypeptide: Regulatory protein RecX (210 aa).

Positions 28 to 47 (SRRQEEGAASSLFDREAEEK) are disordered.

It belongs to the RecX family.

It localises to the cytoplasm. Modulates RecA activity. The protein is Regulatory protein RecX of Corynebacterium efficiens (strain DSM 44549 / YS-314 / AJ 12310 / JCM 11189 / NBRC 100395).